A 358-amino-acid polypeptide reads, in one-letter code: Histidinol-phosphate aminotransferase (358 aa).

N6-(pyridoxal phosphate)lysine is present on lysine 210.

Belongs to the class-II pyridoxal-phosphate-dependent aminotransferase family. Histidinol-phosphate aminotransferase subfamily. In terms of assembly, homodimer. Pyridoxal 5'-phosphate is required as a cofactor.

It catalyses the reaction L-histidinol phosphate + 2-oxoglutarate = 3-(imidazol-4-yl)-2-oxopropyl phosphate + L-glutamate. It functions in the pathway amino-acid biosynthesis; L-histidine biosynthesis; L-histidine from 5-phospho-alpha-D-ribose 1-diphosphate: step 7/9. This is Histidinol-phosphate aminotransferase from Clostridium beijerinckii (strain ATCC 51743 / NCIMB 8052) (Clostridium acetobutylicum).